Here is a 360-residue protein sequence, read N- to C-terminus: Cyclin-Y-like protein 2 (360 aa).

The region spanning 204–286 (RLTAEFAIVS…FLKLINYNIG (83 aa)) is the Cyclin N-terminal domain.

This sequence belongs to the cyclin family. Cyclin Y subfamily.

The sequence is that of Cyclin-Y-like protein 2 (CCNYL2) from Macaca fascicularis (Crab-eating macaque).